A 273-amino-acid polypeptide reads, in one-letter code: Dermonecrotic toxin LapSicTox-alphaIB1b2 (273 aa).

H5 is an active-site residue. Residues E25 and D27 each coordinate Mg(2+). The active-site Nucleophile is the H41. Disulfide bonds link C45–C51 and C47–C190. Residue D85 participates in Mg(2+) binding. N250 carries an N-linked (GlcNAc...) asparagine glycan.

This sequence belongs to the arthropod phospholipase D family. Class II subfamily. It depends on Mg(2+) as a cofactor. As to expression, expressed by the venom gland.

The protein resides in the secreted. The enzyme catalyses an N-(acyl)-sphingosylphosphocholine = an N-(acyl)-sphingosyl-1,3-cyclic phosphate + choline. It catalyses the reaction an N-(acyl)-sphingosylphosphoethanolamine = an N-(acyl)-sphingosyl-1,3-cyclic phosphate + ethanolamine. It carries out the reaction a 1-acyl-sn-glycero-3-phosphocholine = a 1-acyl-sn-glycero-2,3-cyclic phosphate + choline. The catalysed reaction is a 1-acyl-sn-glycero-3-phosphoethanolamine = a 1-acyl-sn-glycero-2,3-cyclic phosphate + ethanolamine. Functionally, dermonecrotic toxins cleave the phosphodiester linkage between the phosphate and headgroup of certain phospholipids (sphingolipid and lysolipid substrates), forming an alcohol (often choline) and a cyclic phosphate. This toxin acts on sphingomyelin (SM). It may also act on ceramide phosphoethanolamine (CPE), lysophosphatidylcholine (LPC) and lysophosphatidylethanolamine (LPE), but not on lysophosphatidylserine (LPS), and lysophosphatidylglycerol (LPG). It acts by transphosphatidylation, releasing exclusively cyclic phosphate products as second products. Induces dermonecrosis, hemolysis, increased vascular permeability, edema, inflammatory response, and platelet aggregation. The sequence is that of Dermonecrotic toxin LapSicTox-alphaIB1b2 from Loxosceles apachea (Apache recluse spider).